The chain runs to 67 residues: Large ribosomal subunit protein uL29 (67 aa).

This sequence belongs to the universal ribosomal protein uL29 family.

The protein is Large ribosomal subunit protein uL29 of Clostridioides difficile (strain 630) (Peptoclostridium difficile).